Reading from the N-terminus, the 139-residue chain is Histone H2B (139 aa).

Basic and acidic residues predominate over residues 1 to 10; sequence MAPKAAEKKP. Positions 1 to 47 are disordered; that stretch reads MAPKAAEKKPSTGGKAPAGGKAPAEKKEAGKKTAASGEKKKRTKARK. Lys8 and Lys9 each carry N6-acetyllysine; alternate. Glycyl lysine isopeptide (Lys-Gly) (interchain with G-Cter in SUMO); alternate cross-links involve residues Lys8 and Lys9. Low complexity predominate over residues 11–22; it reads STGGKAPAGGKA. Residue Lys15 is modified to N6-acetyllysine. Lys26 is modified (N6-acetyllysine; alternate). Residue Lys26 forms a Glycyl lysine isopeptide (Lys-Gly) (interchain with G-Cter in SUMO); alternate linkage. Residue Lys27 forms a Glycyl lysine isopeptide (Lys-Gly) (interchain with G-Cter in SUMO) linkage. Lys133 participates in a covalent cross-link: Glycyl lysine isopeptide (Lys-Gly) (interchain with G-Cter in ubiquitin).

The protein belongs to the histone H2B family. As to quaternary structure, the nucleosome is a histone octamer containing two molecules each of H2A, H2B, H3 and H4 assembled in one H3-H4 heterotetramer and two H2A-H2B heterodimers. The octamer wraps approximately 147 bp of DNA. Post-translationally, monoubiquitinated by the UBC2-BRE1 complex to form H2BK123ub1. H2BK123ub1 gives a specific tag for epigenetic transcriptional activation and is also prerequisite for H3K4me and H3K79me formation. H2BK123ub1 also modulates the formation of double-strand breaks during meiosis and is a prerequisite for DNA-damage checkpoint activation. Acetylated by GCN5 to form H2BK11ac and H2BK16ac. H2BK16ac can also be formed by ESA1. Acetylation of N-terminal lysines and particularly formation of H2BK11acK16ac has a positive effect on transcription. In terms of processing, sumoylation to form H2BK6su or H2BK7su, and probably also H2BK16su or H2BK17su, occurs preferentially near the telomeres and represses gene transcription.

The protein resides in the nucleus. It is found in the chromosome. Functionally, core component of nucleosome. Nucleosomes wrap and compact DNA into chromatin, limiting DNA accessibility to the cellular machineries which require DNA as a template. Histones thereby play a central role in transcription regulation, DNA repair, DNA replication and chromosomal stability. DNA accessibility is regulated via a complex set of post-translational modifications of histones, also called histone code, and nucleosome remodeling. In Coccidioides immitis (strain RS) (Valley fever fungus), this protein is Histone H2B (HTB1).